We begin with the raw amino-acid sequence, 440 residues long: MTVTIVGAQLGDEGKGGVVDLFGDATDVVVRYQGGDNAGHTVVAGGEEYKLSLVPSGVVRGKTGVLGNGCVINPETLFEEVDALRERGLDPDVRLAKRAHVILPFHRELDGAEEAAKADSDSEIGTTGRGIGPTYEDKIGRRGVRVGDLLNEDALRDRLEYLVDAKRAIYEDVYGFDASETDGAFDIDAIHEQCLAYADRIRDEDLAVNAGDYLADRIADGDNVMLEGAQGTSLDIDHGNFPYVTSSNPTAGYAATGSGLGPTTVGQGEIVGIIKAYLSRVGSGPMPTELDGDQAEYIREEGGEYGTVTGRPRRVGWLDMPMLRHAARANGFTGIAINHLDVLAELDEVNVGHAYERDGERIHTLPATTEAWRDCDPVMKSFDGWSAFDPAVVADAGYSALPDNAQAYVEYVEAELDTPAYVLGVGPGREESVIRQNPFE.

GTP-binding positions include 11 to 17 (GDEGKGG) and 39 to 41 (GHT). The active-site Proton acceptor is the aspartate 12. Residues aspartate 12 and glycine 39 each coordinate Mg(2+). IMP-binding positions include 12 to 15 (DEGK), 37 to 40 (NAGH), threonine 127, arginine 141, glutamine 230, threonine 245, and arginine 311. The active-site Proton donor is histidine 40. 307–313 (TVTGRPR) lines the substrate pocket. Residues arginine 313, 339–341 (HLD), and 424–426 (GVG) contribute to the GTP site.

This sequence belongs to the adenylosuccinate synthetase family. In terms of assembly, homodimer. Mg(2+) is required as a cofactor.

It localises to the cytoplasm. It catalyses the reaction IMP + L-aspartate + GTP = N(6)-(1,2-dicarboxyethyl)-AMP + GDP + phosphate + 2 H(+). The protein operates within purine metabolism; AMP biosynthesis via de novo pathway; AMP from IMP: step 1/2. Its function is as follows. Plays an important role in the de novo pathway of purine nucleotide biosynthesis. Catalyzes the first committed step in the biosynthesis of AMP from IMP. The chain is Adenylosuccinate synthetase from Halobacterium salinarum (strain ATCC 29341 / DSM 671 / R1).